The primary structure comprises 617 residues: Acyl-CoA dehydrogenase family member 11 (617 aa).

The tract at residues 1–47 (MHRIGNAVRMASSSSANATITARHTQYSHAKTGGFSQTGPTLHNPYK) is disordered. A compositionally biased stretch (low complexity) spans 11-22 (ASSSSANATITA). Positions 23–41 (RHTQYSHAKTGGFSQTGPT) are enriched in polar residues. Residues 206-215 (QWMTEKKGGS) and 241-243 (FSS) contribute to the FAD site. Ser-215 is a substrate binding site. Residues Ser-267 and Arg-334 each coordinate substrate. FAD-binding positions include Arg-359, 366 to 369 (QSKW), Glu-437, Gly-441, and 464 to 466 (EGT).

The protein belongs to the acyl-CoA dehydrogenase family. Homotetramer; dimer of dimers.

Its function is as follows. Promotes adaption to elevated temperatures by regulating expression of the lipid desaturase, fat-7. Binds selectively and with high affinity to fatty acids with chain lengths from C10 to C12 and prevents them from activating fat-7 expression mediated by the nuclear hormone receptor nhr-49, leading to low levels of membrane lipid desaturation and membrane fluidity for adaption to heat. This Caenorhabditis elegans protein is Acyl-CoA dehydrogenase family member 11.